The chain runs to 205 residues: Probable thymidylate kinase (205 aa).

10-17 (GIDGSGKS) lines the ATP pocket.

Belongs to the thymidylate kinase family.

The catalysed reaction is dTMP + ATP = dTDP + ADP. The polypeptide is Probable thymidylate kinase (Methanosarcina barkeri (strain Fusaro / DSM 804)).